Here is a 33-residue protein sequence, read N- to C-terminus: Pardaxin P-3 (33 aa).

It belongs to the pardaxin family. As to quaternary structure, in aqueous solution exists as a tetramer.

The protein localises to the secreted. Its subcellular location is the target cell membrane. Exhibits unusual shark repellent and surfactant properties. Forms voltage-dependent, ion-permeable channels in membranes. At high concentration causes cell membrane lysis. The sequence is that of Pardaxin P-3 from Pardachirus pavoninus (Peacock sole).